Here is a 98-residue protein sequence, read N- to C-terminus: MKVGVVGDRETAIGFRLAGLTDVYEVKNDEEAVKAINELANNENIAFIIITERIAESIKDKLKNINKVIVEIPDKHGKLERIDPVKELIRKAIGVSMK.

This sequence belongs to the V-ATPase F subunit family. In terms of assembly, the A-type ATPase is composed of subunits A(3), B(3), C, D, E(1 or 2), F, H(2), I and K(x).

It localises to the cell membrane. Its function is as follows. Component of the A-type ATP synthase that produces ATP from ADP in the presence of a proton gradient across the membrane. The sequence is that of A-type ATP synthase subunit F from Methanocaldococcus jannaschii (strain ATCC 43067 / DSM 2661 / JAL-1 / JCM 10045 / NBRC 100440) (Methanococcus jannaschii).